A 178-amino-acid polypeptide reads, in one-letter code: MSIEVSNESGYDVSEPELISVARFVIEKMDVHPAAELSMVLLDSAAMADLHMRWMDLPGPTDVMSFPMDELEPGGRPDAPEPGPAMLGDIVLCPEFAEQQAAKAGHSLGHELALLTVHGVLHLLGYDHAEPDEEKEMFALQRQLLEEWVADQVEAYHADRQSEKDRRLLDKSRYFDEP.

Residues His118, His122, and His128 each contribute to the Zn(2+) site. The tract at residues 158–178 is disordered; that stretch reads ADRQSEKDRRLLDKSRYFDEP.

Belongs to the endoribonuclease YbeY family. Zn(2+) serves as cofactor.

The protein localises to the cytoplasm. Single strand-specific metallo-endoribonuclease involved in late-stage 70S ribosome quality control and in maturation of the 3' terminus of the 16S rRNA. In Mycolicibacterium smegmatis (strain ATCC 700084 / mc(2)155) (Mycobacterium smegmatis), this protein is Endoribonuclease YbeY.